We begin with the raw amino-acid sequence, 185 residues long: MVNSWRVQQAAREIRAGAVIAYPTEAVWGLGCDPWNEEAVDRLLAIKNRSVDKGLILVADNIRQFDFLFEDFPQDWIDRMASTWPGPNTWLVPHQNLLPEWVTGVHDTVALRVSDHPQVRDLCSLVGPLISTSANPQGRPAARTRLRVEQYFRGQVDLVLGGALGGRKNPSLIRDLATGNIVRPA.

The region spanning 4–185 (SWRVQQAARE…LATGNIVRPA (182 aa)) is the YrdC-like domain.

This sequence belongs to the SUA5 family. TsaC subfamily.

The protein localises to the cytoplasm. It carries out the reaction L-threonine + hydrogencarbonate + ATP = L-threonylcarbamoyladenylate + diphosphate + H2O. In terms of biological role, required for the formation of a threonylcarbamoyl group on adenosine at position 37 (t(6)A37) in tRNAs that read codons beginning with adenine. Catalyzes the conversion of L-threonine, HCO(3)(-)/CO(2) and ATP to give threonylcarbamoyl-AMP (TC-AMP) as the acyladenylate intermediate, with the release of diphosphate. This chain is Threonylcarbamoyl-AMP synthase, found in Pseudomonas fluorescens (strain Pf0-1).